We begin with the raw amino-acid sequence, 149 residues long: Large ribosomal subunit protein bL9 (149 aa).

The protein belongs to the bacterial ribosomal protein bL9 family.

Its function is as follows. Binds to the 23S rRNA. The polypeptide is Large ribosomal subunit protein bL9 (Aquifex aeolicus (strain VF5)).